The sequence spans 332 residues: Fructose-1,6-bisphosphatase class 1 (332 aa).

Glutamate 91, aspartate 112, leucine 114, and aspartate 115 together coordinate Mg(2+). Residues 115–118 (DGSS), asparagine 208, tyrosine 241, and lysine 271 contribute to the substrate site. Glutamate 277 lines the Mg(2+) pocket.

This sequence belongs to the FBPase class 1 family. In terms of assembly, homotetramer. Requires Mg(2+) as cofactor.

The protein localises to the cytoplasm. The enzyme catalyses beta-D-fructose 1,6-bisphosphate + H2O = beta-D-fructose 6-phosphate + phosphate. It participates in carbohydrate biosynthesis; Calvin cycle. In Chlorobium phaeobacteroides (strain DSM 266 / SMG 266 / 2430), this protein is Fructose-1,6-bisphosphatase class 1.